Consider the following 422-residue polypeptide: 5-hydroxytryptamine receptor 1A (422 aa).

Residues 1-23 (MDVLSPGQGNNTTSPPAPFETGG) are disordered. The Extracellular segment spans residues 1 to 38 (MDVLSPGQGNNTTSPPAPFETGGNTTGISDVTVSYQVI). N-linked (GlcNAc...) asparagine glycosylation is found at Asn10, Asn11, and Asn24. A helical membrane pass occupies residues 39-59 (TSLLLGTLIFCAVLGNACVVA). Topologically, residues 60-73 (AIALERSLQNVANY) are cytoplasmic. The chain crosses the membrane as a helical span at residues 74–98 (LIGSLAVTDLMVSVLVLPMAALYQV). Over 99 to 107 (LNKWTLGQV) the chain is Extracellular. A helical transmembrane segment spans residues 108-132 (TCDLFIALDVLCCTSSILHLCAIAL). Cys109 and Cys187 are joined by a disulfide. Residues Asp116 and Cys120 each contribute to the serotonin site. The short motif at 133–135 (DRY) is the DRY motif; important for ligand-induced conformation changes element. Residues 133-152 (DRYWAITDPIDYVNKRTPRR) are Cytoplasmic-facing. Residues 153-174 (AAALISLTWLIGFLISIPPMLG) form a helical membrane-spanning segment. Topologically, residues 175–193 (WRTPEDRSDPDACTISKDH) are extracellular. A helical membrane pass occupies residues 194-216 (GYTIYSTFGAFYIPLLLMLVLYG). Topologically, residues 217-346 (RIFRAARFRI…LARERKTVKT (130 aa)) are cytoplasmic. Positions 235–262 (KTGADTRHGASPAPQPKKSVNGESGSRN) are disordered. Thr314, Lys345, Thr346, and Gly352 together coordinate 1D-myo-inositol 4-phosphate. The chain crosses the membrane as a helical span at residues 347–370 (LGIIMGTFILCWLPFFIVALVLPF). Topologically, residues 371-378 (CESSCHMP) are extracellular. Residues 379 to 403 (TLLGAIINWLGYSNSLLNPVIYAYF) traverse the membrane as a helical segment. Positions 396–400 (NPVIY) match the NPxxY motif; important for ligand-induced conformation changes and signaling motif. Residues Phe403, Asn404, and Lys405 each coordinate 1D-myo-inositol 4-phosphate. The Cytoplasmic segment spans residues 404-422 (NKDFQNAFKKIIKCKFCRQ).

This sequence belongs to the G-protein coupled receptor 1 family. 5-hydroxytryptamine receptor subfamily. HTR1A sub-subfamily. As to quaternary structure, heterodimer; heterodimerizes with GPER1. Interacts with YIF1B. Interacts with GPR39 and GALR1. As to expression, detected in lymph nodes, thymus and spleen. Detected in activated T-cells, but not in resting T-cells.

The protein localises to the cell membrane. Its subcellular location is the cell projection. It localises to the dendrite. With respect to regulation, G-protein coupled receptor activity is regulated by lipids: phosphatidylinositol 4-phosphate increases HTR1A-mediated activity. Binding to aripiprazol drug is regulated by cholesterol, which shapes the ligand-binding pocket, determining the specificity for aripiprazol. Activated by IHCH-7179 small molecule: IHCH-7179 acts both as an agonist activator for HTR1A and as an antagonist inhibitor for HTR2A. Activated by SEP-363856 small molecule: IHCH-7179 acts both as an agonist activator for HTR1A and TAAR1. In terms of biological role, G-protein coupled receptor for 5-hydroxytryptamine (serotonin). Also functions as a receptor for various drugs and psychoactive substances. Ligand binding causes a conformation change that triggers signaling via guanine nucleotide-binding proteins (G proteins) and modulates the activity of downstream effectors, such as adenylate cyclase. HTR1A is coupled to G(i)/G(o) G alpha proteins and mediates inhibitory neurotransmission: signaling inhibits adenylate cyclase activity and activates a phosphatidylinositol-calcium second messenger system that regulates the release of Ca(2+) ions from intracellular stores. Beta-arrestin family members regulate signaling by mediating both receptor desensitization and resensitization processes. Plays a role in the regulation of 5-hydroxytryptamine release and in the regulation of dopamine and 5-hydroxytryptamine metabolism. Plays a role in the regulation of dopamine and 5-hydroxytryptamine levels in the brain, and thereby affects neural activity, mood and behavior. Plays a role in the response to anxiogenic stimuli. The protein is 5-hydroxytryptamine receptor 1A of Homo sapiens (Human).